Reading from the N-terminus, the 353-residue chain is Quinolinate synthase (353 aa).

Residues histidine 47 and serine 68 each contribute to the iminosuccinate site. Residue cysteine 113 coordinates [4Fe-4S] cluster. Residues 139–141 and serine 156 each bind iminosuccinate; that span reads YAN. [4Fe-4S] cluster is bound at residue cysteine 200. Iminosuccinate contacts are provided by residues 226-228 and threonine 243; that span reads HPE. Cysteine 297 lines the [4Fe-4S] cluster pocket.

It belongs to the quinolinate synthase family. Type 1 subfamily. [4Fe-4S] cluster is required as a cofactor.

It localises to the cytoplasm. The catalysed reaction is iminosuccinate + dihydroxyacetone phosphate = quinolinate + phosphate + 2 H2O + H(+). It functions in the pathway cofactor biosynthesis; NAD(+) biosynthesis; quinolinate from iminoaspartate: step 1/1. Its function is as follows. Catalyzes the condensation of iminoaspartate with dihydroxyacetone phosphate to form quinolinate. This chain is Quinolinate synthase, found in Photobacterium profundum (strain SS9).